We begin with the raw amino-acid sequence, 318 residues long: tRNA-cytidine(32) 2-sulfurtransferase (318 aa).

Positions 52–57 (SGGKDS) match the PP-loop motif motif. The [4Fe-4S] cluster site is built by C127, C130, and C218.

This sequence belongs to the TtcA family. In terms of assembly, homodimer. Mg(2+) is required as a cofactor. The cofactor is [4Fe-4S] cluster.

The protein resides in the cytoplasm. The catalysed reaction is cytidine(32) in tRNA + S-sulfanyl-L-cysteinyl-[cysteine desulfurase] + AH2 + ATP = 2-thiocytidine(32) in tRNA + L-cysteinyl-[cysteine desulfurase] + A + AMP + diphosphate + H(+). It participates in tRNA modification. Catalyzes the ATP-dependent 2-thiolation of cytidine in position 32 of tRNA, to form 2-thiocytidine (s(2)C32). The sulfur atoms are provided by the cysteine/cysteine desulfurase (IscS) system. This is tRNA-cytidine(32) 2-sulfurtransferase from Actinobacillus pleuropneumoniae serotype 5b (strain L20).